Reading from the N-terminus, the 781-residue chain is Dynamin-related protein dnm1 (781 aa).

Residues 23-328 (FLDLPSIVVV…LVSHIRERLP (306 aa)) enclose the Dynamin-type G domain. A G1 motif region spans residues 33–40 (GSQSCGKS). 33–40 (GSQSCGKS) serves as a coordination point for GTP. Residues 59–61 (VTR) are G2 motif. Residues 76–103 (KNNHDEESTSDNNSEETSAAGETGSLEG) form a disordered region. A G3 motif region spans residues 170 to 173 (DLPG). GTP contacts are provided by residues 170-174 (DLPGL) and 239-242 (TKLD). The interval 239–242 (TKLD) is G4 motif. A G5 motif region spans residues 269–272 (VNRS). In terms of domain architecture, GED spans 694 to 781 (VDLIKELITS…QANKIISTVF (88 aa)).

It belongs to the TRAFAC class dynamin-like GTPase superfamily. Dynamin/Fzo/YdjA family.

Its subcellular location is the cytoplasm. It is found in the mitochondrion outer membrane. The enzyme catalyses GTP + H2O = GDP + phosphate + H(+). Its function is as follows. Microtubule-associated force-producing protein that mediates mitochondrial fission during interphasic growth and at cell division. Fission of mitochondria occurs in many cell types and constitutes an important step in mitochondria morphology, which is balanced between fusion and fission. With vps1, acts redundantly in peroxisome biogenesis, which is under cell cycle control. The chain is Dynamin-related protein dnm1 (dnm1) from Schizosaccharomyces pombe (strain 972 / ATCC 24843) (Fission yeast).